Consider the following 111-residue polypeptide: Fertilization-influencing membrane protein (111 aa).

Positions 1 to 23 are cleaved as a signal peptide; that stretch reads MKLWLWVAVGVWMLMAELGTIET. Residues 85–105 form a helical membrane-spanning segment; the sequence is ILVGTLVVAFFFLLFQFCLHV.

In terms of tissue distribution, testis-specific.

The protein resides in the cell membrane. Its subcellular location is the secreted. Its function is as follows. Plays a role in sperm-oocyte fusion process during fertilization. The polypeptide is Fertilization-influencing membrane protein (Mus musculus (Mouse)).